Here is a 638-residue protein sequence, read N- to C-terminus: 1,4-alpha-glucan branching enzyme GlgB (638 aa).

The active-site Nucleophile is the Asp-303. The active-site Proton donor is Glu-356.

This sequence belongs to the glycosyl hydrolase 13 family. GlgB subfamily. Monomer.

The catalysed reaction is Transfers a segment of a (1-&gt;4)-alpha-D-glucan chain to a primary hydroxy group in a similar glucan chain.. It participates in glycan biosynthesis; glycogen biosynthesis. Catalyzes the formation of the alpha-1,6-glucosidic linkages in glycogen by scission of a 1,4-alpha-linked oligosaccharide from growing alpha-1,4-glucan chains and the subsequent attachment of the oligosaccharide to the alpha-1,6 position. In Lactobacillus acidophilus (strain ATCC 700396 / NCK56 / N2 / NCFM), this protein is 1,4-alpha-glucan branching enzyme GlgB.